The sequence spans 1270 residues: Nuclear exosome regulator NRDE2 (1270 aa).

Disordered regions lie at residues 1 to 22 and 119 to 209; these read MFRAYGNNGLKNPERISGENPD and SVKS…HTLM. The segment covering 119–135 has biased composition (polar residues); the sequence is SVKSLNGCQDPPETSQQ. Over residues 164–184 the composition is skewed to basic residues; sequence QRSRSREKKRRKKERRRKRSS. Residues 192 to 204 are compositionally biased toward basic and acidic residues; that stretch reads RSRDRSSRARDTS.

This sequence belongs to the NRDE2 family. As to quaternary structure, interacts with nrde-3.

The protein resides in the nucleus. The protein localises to the nucleus speckle. Its subcellular location is the nucleolus. Functionally, protein of the nuclear speckles that regulates RNA exosomal degradation. Involved in short interfering RNAs-mediated silencing in nuclei. Functions with nrde-3 in the nuclear RNA-mediated gene silencing (RNAi) pathway to regulate gene expression via inhibition of RNA polymerases I and II during the elongation phase of transcription. Required for exogenous RNAi-induced H3K27 methylation. The sequence is that of Nuclear exosome regulator NRDE2 (nrde-2) from Caenorhabditis elegans.